Reading from the N-terminus, the 275-residue chain is 2-dehydro-3-deoxyphosphooctonate aldolase (275 aa).

The protein belongs to the KdsA family.

The protein resides in the cytoplasm. It catalyses the reaction D-arabinose 5-phosphate + phosphoenolpyruvate + H2O = 3-deoxy-alpha-D-manno-2-octulosonate-8-phosphate + phosphate. The protein operates within carbohydrate biosynthesis; 3-deoxy-D-manno-octulosonate biosynthesis; 3-deoxy-D-manno-octulosonate from D-ribulose 5-phosphate: step 2/3. It functions in the pathway bacterial outer membrane biogenesis; lipopolysaccharide biosynthesis. This chain is 2-dehydro-3-deoxyphosphooctonate aldolase, found in Francisella tularensis subsp. novicida (strain U112).